We begin with the raw amino-acid sequence, 54 residues long: Photosystem II reaction center protein K (54 aa).

Positions 1–17 (MSFENFAIITLKENVFA) are excised as a propeptide. The chain crosses the membrane as a helical span at residues 33–53 (LPIIPVLFLLLAFVWQSAVKF).

It belongs to the PsbK family. PSII is composed of 1 copy each of membrane proteins PsbA, PsbB, PsbC, PsbD, PsbE, PsbF, PsbH, PsbI, PsbJ, PsbK, PsbL, PsbM, PsbT, PsbY, PsbZ, Psb30/Ycf12, at least 3 peripheral proteins of the oxygen-evolving complex and a large number of cofactors. It forms dimeric complexes.

The protein localises to the plastid. It is found in the chloroplast thylakoid membrane. One of the components of the core complex of photosystem II (PSII). PSII is a light-driven water:plastoquinone oxidoreductase that uses light energy to abstract electrons from H(2)O, generating O(2) and a proton gradient subsequently used for ATP formation. It consists of a core antenna complex that captures photons, and an electron transfer chain that converts photonic excitation into a charge separation. The chain is Photosystem II reaction center protein K from Euglena deses.